The primary structure comprises 425 residues: 3-isopropylmalate dehydratase large subunit (425 aa).

C306, C366, and C369 together coordinate [4Fe-4S] cluster.

It belongs to the aconitase/IPM isomerase family. LeuC type 2 subfamily. In terms of assembly, heterodimer of LeuC and LeuD. [4Fe-4S] cluster serves as cofactor.

It carries out the reaction (2R,3S)-3-isopropylmalate = (2S)-2-isopropylmalate. Its pathway is amino-acid biosynthesis; L-leucine biosynthesis; L-leucine from 3-methyl-2-oxobutanoate: step 2/4. In terms of biological role, catalyzes the isomerization between 2-isopropylmalate and 3-isopropylmalate, via the formation of 2-isopropylmaleate. This is 3-isopropylmalate dehydratase large subunit from Nautilia profundicola (strain ATCC BAA-1463 / DSM 18972 / AmH).